The following is a 271-amino-acid chain: uncharacterized protein (271 aa).

The signal sequence occupies residues 1–22 (MARELLFLACAIVIADSWPAKA).

This is an uncharacterized protein from Sinorhizobium fredii (strain NBRC 101917 / NGR234).